The chain runs to 406 residues: MTFPVEKVRADFPILQREVNGLPLAYLDSAASAQKPNQVIDAESAFYRHGYAAVHRGIHTLSVQATESMENVRKQASRFINARSAEELVFVRGTTEGINLVANSWGTENIRAGDNIIISEMEHHANIVPWQILCERKGAELRVIPLHPDGTLRLETLAALFDDRTRLLAITHVSNVLGTENPLPDMIALARQHGAKVLVDGAQAVMHHAVDVQALDCDFYVFSGHKLYGPTGIGILYVKEALLQEMPPWEGGGSMISTVSLTQGTTWAKAPWRFEAGTPNTGGIIGLGAAIDYVTSLGLDKIGDYEQMLMRYALEQLAQVPDITLYGPAQRLGVIAFNLGKHHAYDVGSFLDNYGIAVRTGHHCAMPLMAWYGVPAMCRASLAMYNTHEEVDRLVAGLTRIHRLLG.

Lys226 carries the post-translational modification N6-(pyridoxal phosphate)lysine. Cys364 acts as the Cysteine persulfide intermediate in catalysis.

The protein belongs to the class-V pyridoxal-phosphate-dependent aminotransferase family. Csd subfamily. As to quaternary structure, homodimer. Interacts with SufE and the SufBCD complex composed of SufB, SufC and SufD. The interaction with SufE is required to mediate the direct transfer of the sulfur atom from the S-sulfanylcysteine. Pyridoxal 5'-phosphate serves as cofactor.

The protein resides in the cytoplasm. The catalysed reaction is (sulfur carrier)-H + L-cysteine = (sulfur carrier)-SH + L-alanine. The enzyme catalyses L-selenocysteine + AH2 = hydrogenselenide + L-alanine + A + H(+). It participates in cofactor biosynthesis; iron-sulfur cluster biosynthesis. Cysteine desulfurases mobilize the sulfur from L-cysteine to yield L-alanine, an essential step in sulfur metabolism for biosynthesis of a variety of sulfur-containing biomolecules. Component of the suf operon, which is activated and required under specific conditions such as oxidative stress and iron limitation. Acts as a potent selenocysteine lyase in vitro, that mobilizes selenium from L-selenocysteine. Selenocysteine lyase activity is however unsure in vivo. The chain is Cysteine desulfurase from Salmonella dublin (strain CT_02021853).